Reading from the N-terminus, the 94-residue chain is Pyrimidine/purine nucleoside phosphorylase (94 aa).

This sequence belongs to the nucleoside phosphorylase PpnP family.

The catalysed reaction is a purine D-ribonucleoside + phosphate = a purine nucleobase + alpha-D-ribose 1-phosphate. The enzyme catalyses adenosine + phosphate = alpha-D-ribose 1-phosphate + adenine. It carries out the reaction cytidine + phosphate = cytosine + alpha-D-ribose 1-phosphate. It catalyses the reaction guanosine + phosphate = alpha-D-ribose 1-phosphate + guanine. The catalysed reaction is inosine + phosphate = alpha-D-ribose 1-phosphate + hypoxanthine. The enzyme catalyses thymidine + phosphate = 2-deoxy-alpha-D-ribose 1-phosphate + thymine. It carries out the reaction uridine + phosphate = alpha-D-ribose 1-phosphate + uracil. It catalyses the reaction xanthosine + phosphate = alpha-D-ribose 1-phosphate + xanthine. Its function is as follows. Catalyzes the phosphorolysis of diverse nucleosides, yielding D-ribose 1-phosphate and the respective free bases. Can use uridine, adenosine, guanosine, cytidine, thymidine, inosine and xanthosine as substrates. Also catalyzes the reverse reactions. The sequence is that of Pyrimidine/purine nucleoside phosphorylase from Vibrio parahaemolyticus serotype O3:K6 (strain RIMD 2210633).